A 708-amino-acid chain; its full sequence is Ubiquitin thioesterase Zranb1 (708 aa).

The RanBP2-type 1 zinc-finger motif lies at 3-33 (EHGIKWACEYCTYENWPSAIKCTMCRAQRPS). Positions 10, 13, 24, and 27 each coordinate Zn(2+). The segment at 38–73 (TEDPFKSGSSDVGRDWDPSSTEGGSSPLICPDSSAR) is disordered. 2 consecutive RanBP2-type zinc fingers follow at residues 84–113 (NANK…QRRT) and 149–178 (RTQH…PRPN). Cysteine 90, cysteine 93, cysteine 104, cysteine 107, cysteine 155, cysteine 158, cysteine 169, and cysteine 172 together coordinate Zn(2+). Residues 202–224 (RWRGGCSSGNSQRRSPPTTKRDS) are disordered. A compositionally biased stretch (polar residues) spans 209 to 219 (SGNSQRRSPPT). ANK repeat units follow at residues 260–290 (KKTD…SGGD) and 313–340 (YTLV…QQAA). The OTU domain maps to 432–592 (LYALWNRTAG…RGHFSALVAM (161 aa)). The Nucleophile role is filled by cysteine 443. Histidine 585 (proton acceptor) is an active-site residue.

It belongs to the peptidase C64 family. As to quaternary structure, interacts with TRAF6. Interacts with APC.

The protein resides in the cytoplasm. The protein localises to the nucleus. The enzyme catalyses Thiol-dependent hydrolysis of ester, thioester, amide, peptide and isopeptide bonds formed by the C-terminal Gly of ubiquitin (a 76-residue protein attached to proteins as an intracellular targeting signal).. Ubiquitin thioesterase, which specifically hydrolyzes 'Lys-29'-linked and 'Lys-33'-linked diubiquitin. Also cleaves 'Lys-63'-linked chains, but with 40-fold less efficiency compared to 'Lys-29'-linked ones. Positive regulator of the Wnt signaling pathway that deubiquitinates APC protein, a negative regulator of Wnt-mediated transcription. Acts as a regulator of autophagy by mediating deubiquitination of PIK3C3/VPS34, thereby promoting autophagosome maturation. Plays a role in the regulation of cell morphology and cytoskeletal organization. Required in the stress fiber dynamics and cell migration. The protein is Ubiquitin thioesterase Zranb1 of Mus musculus (Mouse).